The chain runs to 177 residues: Adenine phosphoribosyltransferase (177 aa).

It belongs to the purine/pyrimidine phosphoribosyltransferase family. In terms of assembly, homodimer.

The protein resides in the cytoplasm. The catalysed reaction is AMP + diphosphate = 5-phospho-alpha-D-ribose 1-diphosphate + adenine. The protein operates within purine metabolism; AMP biosynthesis via salvage pathway; AMP from adenine: step 1/1. Functionally, catalyzes a salvage reaction resulting in the formation of AMP, that is energically less costly than de novo synthesis. The sequence is that of Adenine phosphoribosyltransferase from Chlorobium limicola (strain DSM 245 / NBRC 103803 / 6330).